The chain runs to 334 residues: Ribosomal RNA small subunit methyltransferase H (334 aa).

Residues 54–56 (GGH), aspartate 74, phenylalanine 100, aspartate 121, and glutamine 128 contribute to the S-adenosyl-L-methionine site. Positions 272–318 (RHSKGQYPEDENLPMPPKRPRYFSKPKRVGPSKAEISNNPRSRSAWL) are disordered. Over residues 289–301 (KRPRYFSKPKRVG) the composition is skewed to basic residues.

Belongs to the methyltransferase superfamily. RsmH family.

The protein resides in the cytoplasm. The enzyme catalyses cytidine(1402) in 16S rRNA + S-adenosyl-L-methionine = N(4)-methylcytidine(1402) in 16S rRNA + S-adenosyl-L-homocysteine + H(+). Functionally, specifically methylates the N4 position of cytidine in position 1402 (C1402) of 16S rRNA. In Psychrobacter arcticus (strain DSM 17307 / VKM B-2377 / 273-4), this protein is Ribosomal RNA small subunit methyltransferase H.